A 165-amino-acid chain; its full sequence is 3-isopropylmalate dehydratase small subunit (165 aa).

The protein belongs to the LeuD family. LeuD type 2 subfamily. In terms of assembly, heterodimer of LeuC and LeuD.

The catalysed reaction is (2R,3S)-3-isopropylmalate = (2S)-2-isopropylmalate. It functions in the pathway amino-acid biosynthesis; L-leucine biosynthesis; L-leucine from 3-methyl-2-oxobutanoate: step 2/4. In terms of biological role, catalyzes the isomerization between 2-isopropylmalate and 3-isopropylmalate, via the formation of 2-isopropylmaleate. This is 3-isopropylmalate dehydratase small subunit from Saccharolobus islandicus (strain Y.N.15.51 / Yellowstone #2) (Sulfolobus islandicus).